We begin with the raw amino-acid sequence, 263 residues long: Tropinone reductase homolog At2g29300 (263 aa).

13 to 37 provides a ligand contact to NADP(+); it reads LVTGAASGIGYAIVEELAGFGARIH. Serine 146 serves as a coordination point for substrate. Residue tyrosine 160 is the Proton acceptor of the active site.

It belongs to the short-chain dehydrogenases/reductases (SDR) family. SDR65C subfamily.

In Arabidopsis thaliana (Mouse-ear cress), this protein is Tropinone reductase homolog At2g29300.